Reading from the N-terminus, the 560-residue chain is Putative transport protein VIBHAR_02636 (560 aa).

Transmembrane regions (helical) follow at residues 8 to 28, 37 to 57, 66 to 86, 91 to 111, and 164 to 184; these read LLEQ…LAFG, LGNS…GFSF, FMLF…GIFF, HYFI…YFCS, and VGYA…AKLL. RCK C-terminal domains follow at residues 205–292 and 293–376; these read LGNS…FRNG and KEVF…KIGF. Transmembrane regions (helical) follow at residues 386–406, 409–429, 450–470, 478–498, 505–525, and 539–559; these read LLAF…TMTF, VSFS…LGFL, LGLM…IFEH, IIGL…LVGA, SALL…MDVV, and AGTY…LIIL.

Belongs to the AAE transporter (TC 2.A.81) family. YbjL subfamily.

It is found in the cell membrane. This chain is Putative transport protein VIBHAR_02636, found in Vibrio campbellii (strain ATCC BAA-1116).